A 260-amino-acid chain; its full sequence is Acetylglutamate kinase (260 aa).

Residues 46–47 (GG), Arg-68, and Asn-160 each bind substrate.

It belongs to the acetylglutamate kinase family. ArgB subfamily.

It localises to the cytoplasm. It catalyses the reaction N-acetyl-L-glutamate + ATP = N-acetyl-L-glutamyl 5-phosphate + ADP. It participates in amino-acid biosynthesis; L-arginine biosynthesis; N(2)-acetyl-L-ornithine from L-glutamate: step 2/4. Functionally, catalyzes the ATP-dependent phosphorylation of N-acetyl-L-glutamate. This is Acetylglutamate kinase from Shewanella sp. (strain ANA-3).